The primary structure comprises 144 residues: Ig heavy chain V region M167 (144 aa).

The signal sequence occupies residues 1-19; the sequence is MKMWLNWVFLLTLLHGIQC. Residues 20-133 enclose the Ig-like domain; the sequence is EVKVVESGGG…GNSYFGYFDV (114 aa).

The polypeptide is Ig heavy chain V region M167 (Mus musculus (Mouse)).